A 101-amino-acid polypeptide reads, in one-letter code: Small ribosomal subunit protein uS14 (101 aa).

The protein belongs to the universal ribosomal protein uS14 family. Part of the 30S ribosomal subunit. Contacts proteins S3 and S10.

Functionally, binds 16S rRNA, required for the assembly of 30S particles and may also be responsible for determining the conformation of the 16S rRNA at the A site. This chain is Small ribosomal subunit protein uS14, found in Klebsiella pneumoniae (strain 342).